Here is a 624-residue protein sequence, read N- to C-terminus: Phragmoplastin DRP1E (624 aa).

The residue at position 2 (T2) is an N-acetylthreonine. The 270-residue stretch at 37–306 (WEALPTVAVV…LESVIRTRIP (270 aa)) folds into the Dynamin-type G domain. A G1 motif region spans residues 47–54 (GGQSSGKS). Position 50–55 (50–55 (SSGKSS)) interacts with GTP. Residues 73 to 75 (VTR) form a G2 motif region. Positions 148 to 151 (DLPG) are G3 motif. The interval 217–220 (TKLD) is G4 motif. Residues 218-223 (KLDLMD) and 248-251 (NRSQ) contribute to the GTP site. Residues 247–250 (VNRS) are G5 motif. One can recognise a GED domain in the interval 532 to 624 (FRRIASNVSA…DEIDAVAWVR (93 aa)).

The protein belongs to the TRAFAC class dynamin-like GTPase superfamily. Dynamin/Fzo/YdjA family. In terms of assembly, forms homodimer and may homooligomerize and heterooligomerize to form the phragmoplastin complex. Binds to PHIP1. In terms of tissue distribution, ubiquitous.

It localises to the cytoplasm. The protein resides in the cytoskeleton. The protein localises to the phragmoplast. It carries out the reaction GTP + H2O = GDP + phosphate + H(+). Functionally, microtubule-associated force-producing protein that is targeted to the tubulo-vesicular network of the forming cell plate during cytokinesis. Also plays a major role in plasma membrane maintenance and cell wall integrity with an implication in vesicular trafficking, polar cell expansion, and other aspects of plant growth and development. Has a GTPase activity. The polypeptide is Phragmoplastin DRP1E (Arabidopsis thaliana (Mouse-ear cress)).